Consider the following 90-residue polypeptide: Leech factor Xa inhibitor (90 aa).

It localises to the secreted. Functionally, potent anticoagulant inhibiting the amidolytic activity of factor Xa (F10) (Ki=4nM) and reducing its ability to activate prothrombin (F2) in the prothrombinase complex (EC(50)=40nM). This is Leech factor Xa inhibitor from Haementeria depressa (Leech).